Here is a 385-residue protein sequence, read N- to C-terminus: Acetylornithine aminotransferase (385 aa).

Pyridoxal 5'-phosphate is bound by residues 94-95 (GT) and Phe-126. Arg-129 serves as a coordination point for N(2)-acetyl-L-ornithine. 211-214 (DEVQ) is a binding site for pyridoxal 5'-phosphate. At Lys-240 the chain carries N6-(pyridoxal phosphate)lysine. Thr-267 provides a ligand contact to N(2)-acetyl-L-ornithine. A pyridoxal 5'-phosphate-binding site is contributed by Thr-268.

Belongs to the class-III pyridoxal-phosphate-dependent aminotransferase family. ArgD subfamily. As to quaternary structure, homodimer. Requires pyridoxal 5'-phosphate as cofactor.

The protein resides in the cytoplasm. It carries out the reaction N(2)-acetyl-L-ornithine + 2-oxoglutarate = N-acetyl-L-glutamate 5-semialdehyde + L-glutamate. It participates in amino-acid biosynthesis; L-arginine biosynthesis; N(2)-acetyl-L-ornithine from L-glutamate: step 4/4. This Thermotoga maritima (strain ATCC 43589 / DSM 3109 / JCM 10099 / NBRC 100826 / MSB8) protein is Acetylornithine aminotransferase.